The following is a 209-amino-acid chain: Ribosomal RNA large subunit methyltransferase E (209 aa).

The S-adenosyl-L-methionine site is built by Gly63, Trp65, Asp83, Asp99, and Asp124. Catalysis depends on Lys164, which acts as the Proton acceptor.

The protein belongs to the class I-like SAM-binding methyltransferase superfamily. RNA methyltransferase RlmE family.

The protein resides in the cytoplasm. The enzyme catalyses uridine(2552) in 23S rRNA + S-adenosyl-L-methionine = 2'-O-methyluridine(2552) in 23S rRNA + S-adenosyl-L-homocysteine + H(+). Its function is as follows. Specifically methylates the uridine in position 2552 of 23S rRNA at the 2'-O position of the ribose in the fully assembled 50S ribosomal subunit. This chain is Ribosomal RNA large subunit methyltransferase E, found in Colwellia psychrerythraea (strain 34H / ATCC BAA-681) (Vibrio psychroerythus).